We begin with the raw amino-acid sequence, 235 residues long: MSTESMIRDVELAEGPLPKKAGGPQGSKRCLCLSLFSFLLVAGATTLFCLLHFRVIGPQEEEQSPNNLHLVNPVAQMVTLRSASRALSDKPLAHVVANPQVEGQLQWLSQRANALLANGMKLTDNQLVVPADGLYLIYSQVLFSGQGCRSYVLLTHTVSRFAVSYPNKVNLLSAIKSPCHRETPEEAEPMAWYEPIYLGGVFQLEKGDRLSTEVNQPEYLDLAESGQVYFGIIAL.

Residues 1–35 are Cytoplasmic-facing; sequence MSTESMIRDVELAEGPLPKKAGGPQGSKRCLCLSL. Phosphoserine; by CK1 is present on Ser2. Residues Lys19 and Lys20 are each lipidated (N6-myristoyl lysine). A helical; Signal-anchor for type II membrane protein membrane pass occupies residues 36–56; it reads FSFLLVAGATTLFCLLHFRVI. Over 57–235 the chain is Extracellular; that stretch reads GPQEEEQSPN…GQVYFGIIAL (179 aa). A THD domain is found at 91-235; the sequence is PLAHVVANPQ…GQVYFGIIAL (145 aa). A disulfide bridge connects residues Cys148 and Cys179.

Belongs to the tumor necrosis factor family. As to quaternary structure, homotrimer. Interacts with SPPL2B. In terms of processing, the soluble form derives from the membrane form by proteolytic processing. The membrane-bound form is further proteolytically processed by SPPL2A or SPPL2B through regulated intramembrane proteolysis producing TNF intracellular domains (ICD1 and ICD2) released in the cytosol and TNF C-domain 1 and C-domain 2 secreted into the extracellular space. The membrane form, but not the soluble form, is phosphorylated on serine residues. Dephosphorylation of the membrane form occurs by binding to soluble TNFRSF1A/TNFR1. Post-translationally, O-glycosylated; glycans contain galactose, N-acetylgalactosamine and N-acetylneuraminic acid. In terms of processing, the soluble form is demyristoylated by SIRT6, promoting its secretion.

Its subcellular location is the cell membrane. It is found in the membrane. The protein resides in the secreted. Its function is as follows. Cytokine that binds to TNFRSF1A/TNFR1 and TNFRSF1B/TNFBR. It is mainly secreted by macrophages and can induce cell death of certain tumor cell lines. It is potent pyrogen causing fever by direct action or by stimulation of interleukin-1 secretion and is implicated in the induction of cachexia, Under certain conditions it can stimulate cell proliferation and induce cell differentiation. Induces insulin resistance in adipocytes via inhibition of insulin-induced IRS1 tyrosine phosphorylation and insulin-induced glucose uptake. Induces GKAP42 protein degradation in adipocytes which is partially responsible for TNF-induced insulin resistance. Plays a role in angiogenesis by inducing VEGF production synergistically with IL1B and IL6. Promotes osteoclastogenesis and therefore mediates bone resorption. Functionally, the TNF intracellular domain (ICD) form induces IL12 production in dendritic cells. This chain is Tumor necrosis factor (TNF), found in Oryctolagus cuniculus (Rabbit).